Reading from the N-terminus, the 506-residue chain is Tyrosine-protein kinase isoform SRK4 (506 aa).

Composition is skewed to polar residues over residues 1–10 and 18–31; these read MGSCCSSQDG and AGSTVDSHELSQSV. Residues 1–53 are disordered; that stretch reads MGSCCSSQDGDGNGKATAGSTVDSHELSQSVKGKIKQPEPKPKPPPQVPPAQD. Residues 54–116 form the SH3 domain; the sequence is VKYPIYVGKY…PSNYVAEYKS (63 aa). In terms of domain architecture, SH2 spans 122–214; that stretch reads WFFGQVKRVD…GLCVNLKGPC (93 aa). A Protein kinase domain is found at 240–493; it reads IKLLRGLGAG…TLSWQLEEFF (254 aa). ATP is bound by residues 246–254 and K268; that span reads LGAGQFGEV. The active-site Proton acceptor is the D359.

Belongs to the protein kinase superfamily. Tyr protein kinase family.

It localises to the cytoplasm. The enzyme catalyses L-tyrosyl-[protein] + ATP = O-phospho-L-tyrosyl-[protein] + ADP + H(+). This chain is Tyrosine-protein kinase isoform SRK4 (SRK1), found in Spongilla lacustris (Freshwater sponge).